The sequence spans 120 residues: MALNIEEIIASVKEASVLELNDLVKAIEEEFGVTAAAPVAVAAAGGGAAEQTEFTVELSSAGDSKIKVIKVVREITGLGLKEAKELVDNAPKALKEGVAKEEAEEIKAKLEEVGANVEVK.

It belongs to the bacterial ribosomal protein bL12 family. As to quaternary structure, homodimer. Part of the ribosomal stalk of the 50S ribosomal subunit. Forms a multimeric L10(L12)X complex, where L10 forms an elongated spine to which 2 to 4 L12 dimers bind in a sequential fashion. Binds GTP-bound translation factors.

Forms part of the ribosomal stalk which helps the ribosome interact with GTP-bound translation factors. Is thus essential for accurate translation. The polypeptide is Large ribosomal subunit protein bL12 (Listeria welshimeri serovar 6b (strain ATCC 35897 / DSM 20650 / CCUG 15529 / CIP 8149 / NCTC 11857 / SLCC 5334 / V8)).